Reading from the N-terminus, the 113-residue chain is Protein MGF 110-2L (113 aa).

The N-terminal stretch at 1–31 is a signal peptide; sequence MGFFSYLGLVLVGLASLTSLASLANLQDFST.

This sequence belongs to the asfivirus MGF 110 family.

In terms of biological role, plays a role in virus cell tropism, and may be required for efficient virus replication in macrophages. The chain is Protein MGF 110-2L from African swine fever virus (isolate Pig/Kenya/KEN-50/1950) (ASFV).